A 311-amino-acid polypeptide reads, in one-letter code: tRNA-cytidine(32) 2-sulfurtransferase (311 aa).

Positions 47–52 (SGGKDS) match the PP-loop motif motif. Residues cysteine 122, cysteine 125, and cysteine 213 each coordinate [4Fe-4S] cluster.

Belongs to the TtcA family. As to quaternary structure, homodimer. Mg(2+) serves as cofactor. [4Fe-4S] cluster is required as a cofactor.

The protein localises to the cytoplasm. It catalyses the reaction cytidine(32) in tRNA + S-sulfanyl-L-cysteinyl-[cysteine desulfurase] + AH2 + ATP = 2-thiocytidine(32) in tRNA + L-cysteinyl-[cysteine desulfurase] + A + AMP + diphosphate + H(+). The protein operates within tRNA modification. Its function is as follows. Catalyzes the ATP-dependent 2-thiolation of cytidine in position 32 of tRNA, to form 2-thiocytidine (s(2)C32). The sulfur atoms are provided by the cysteine/cysteine desulfurase (IscS) system. The polypeptide is tRNA-cytidine(32) 2-sulfurtransferase (Escherichia coli O139:H28 (strain E24377A / ETEC)).